Reading from the N-terminus, the 545-residue chain is T-complex protein 1 subunit alpha (545 aa).

N-acetylserine is present on Ser-2.

Belongs to the TCP-1 chaperonin family. As to quaternary structure, heterooligomeric complex of about 850 to 900 kDa that forms two stacked rings, 12 to 16 nm in diameter.

The protein resides in the cytoplasm. Functionally, molecular chaperone; assists the folding of proteins upon ATP hydrolysis. Known to play a role, in vitro, in the folding of actin and tubulin. In Arabidopsis thaliana (Mouse-ear cress), this protein is T-complex protein 1 subunit alpha.